A 124-amino-acid polypeptide reads, in one-letter code: Probable glycine cleavage system H protein (124 aa).

Residues 23 to 104 (VATVGITDYA…PYKNWLVKIR (82 aa)) form the Lipoyl-binding domain. Lys-64 carries the post-translational modification N6-lipoyllysine.

The protein belongs to the GcvH family. In terms of assembly, the glycine cleavage system is composed of four proteins: P, T, L and H. It depends on (R)-lipoate as a cofactor.

Functionally, the glycine cleavage system catalyzes the degradation of glycine. The H protein shuttles the methylamine group of glycine from the P protein to the T protein. The sequence is that of Probable glycine cleavage system H protein from Picrophilus torridus (strain ATCC 700027 / DSM 9790 / JCM 10055 / NBRC 100828 / KAW 2/3).